The sequence spans 216 residues: Cytidylate kinase (216 aa).

Position 7 to 15 (7 to 15 (GPSGTGKST)) interacts with ATP.

This sequence belongs to the cytidylate kinase family. Type 1 subfamily.

It is found in the cytoplasm. It carries out the reaction CMP + ATP = CDP + ADP. The enzyme catalyses dCMP + ATP = dCDP + ADP. This Chlamydia trachomatis serovar D (strain ATCC VR-885 / DSM 19411 / UW-3/Cx) protein is Cytidylate kinase.